The chain runs to 131 residues: D-ribose pyranase (131 aa).

Residue histidine 20 is the Proton donor of the active site. Substrate is bound by residues aspartate 28, histidine 98, and tyrosine 120–asparagine 122.

It belongs to the RbsD / FucU family. RbsD subfamily. As to quaternary structure, homodecamer.

It is found in the cytoplasm. The catalysed reaction is beta-D-ribopyranose = beta-D-ribofuranose. Its pathway is carbohydrate metabolism; D-ribose degradation; D-ribose 5-phosphate from beta-D-ribopyranose: step 1/2. Catalyzes the interconversion of beta-pyran and beta-furan forms of D-ribose. The polypeptide is D-ribose pyranase (Bacillus licheniformis (strain ATCC 14580 / DSM 13 / JCM 2505 / CCUG 7422 / NBRC 12200 / NCIMB 9375 / NCTC 10341 / NRRL NRS-1264 / Gibson 46)).